We begin with the raw amino-acid sequence, 321 residues long: Arginine-hydroxylase NDUFAF5, mitochondrial (321 aa).

A mitochondrion-targeting transit peptide spans Met1 to Asn25.

This sequence belongs to the methyltransferase superfamily. In terms of assembly, interacts with NDUFS7.

The protein localises to the mitochondrion inner membrane. In terms of biological role, arginine hydroxylase that mediates hydroxylation of 'Arg-111' of NDUFS7 and is involved in the assembly of mitochondrial NADH:ubiquinone oxidoreductase complex (complex I, MT-ND1) at early stages. May also have methyltransferase activity. The chain is Arginine-hydroxylase NDUFAF5, mitochondrial from Danio rerio (Zebrafish).